Consider the following 61-residue polypeptide: Putative antitoxin VapB13 (61 aa).

It belongs to the UPF0165 family.

Functionally, possibly the antitoxin component of a type II toxin-antitoxin (TA) system. Its cognate toxin is VapC13 (Potential). The protein is Putative antitoxin VapB13 (vapB13) of Archaeoglobus fulgidus (strain ATCC 49558 / DSM 4304 / JCM 9628 / NBRC 100126 / VC-16).